The sequence spans 415 residues: Glucose-1-phosphate adenylyltransferase (415 aa).

Residues Y98, G163, 178 to 179 (EK), and S189 each bind alpha-D-glucose 1-phosphate.

Belongs to the bacterial/plant glucose-1-phosphate adenylyltransferase family. In terms of assembly, homotetramer.

The enzyme catalyses alpha-D-glucose 1-phosphate + ATP + H(+) = ADP-alpha-D-glucose + diphosphate. It participates in glycan biosynthesis; glycogen biosynthesis. Involved in the biosynthesis of ADP-glucose, a building block required for the elongation reactions to produce glycogen. Catalyzes the reaction between ATP and alpha-D-glucose 1-phosphate (G1P) to produce pyrophosphate and ADP-Glc. This is Glucose-1-phosphate adenylyltransferase from Fervidobacterium nodosum (strain ATCC 35602 / DSM 5306 / Rt17-B1).